The sequence spans 349 residues: Anthranilate phosphoribosyltransferase (349 aa).

5-phospho-alpha-D-ribose 1-diphosphate-binding positions include Gly-82, 85–86 (GD), 92–95 (NVSS), 110–118 (KHGNRAVSG), and Ser-122. Residue Gly-82 participates in anthranilate binding. Ser-94 contributes to the Mg(2+) binding site. Asn-113 contacts anthranilate. An anthranilate-binding site is contributed by Arg-168. Mg(2+)-binding residues include Asp-227 and Glu-228.

The protein belongs to the anthranilate phosphoribosyltransferase family. As to quaternary structure, homodimer. The cofactor is Mg(2+).

It catalyses the reaction N-(5-phospho-beta-D-ribosyl)anthranilate + diphosphate = 5-phospho-alpha-D-ribose 1-diphosphate + anthranilate. Its pathway is amino-acid biosynthesis; L-tryptophan biosynthesis; L-tryptophan from chorismate: step 2/5. Catalyzes the transfer of the phosphoribosyl group of 5-phosphorylribose-1-pyrophosphate (PRPP) to anthranilate to yield N-(5'-phosphoribosyl)-anthranilate (PRA). The protein is Anthranilate phosphoribosyltransferase of Pseudomonas aeruginosa (strain LESB58).